The sequence spans 789 residues: Polyribonucleotide nucleotidyltransferase (789 aa).

Residues Asp-494 and Asp-500 each contribute to the Mg(2+) site. The region spanning 561 to 620 (PRIESIFINKDKIRNVIGSGGKNIREICEKTGARVEIMQDGTVMIYAINNDAVEYAKNMI) is the KH domain. An S1 motif domain is found at 630–697 (GKVFDGTVIE…DREYVQLSMR (68 aa)). The tract at residues 709–789 (GELYNIRKTN…NEVPRKPRFF (81 aa)) is disordered. Positions 737 to 749 (SEKKRRGSGRSRR) are enriched in basic residues. Residues 763–780 (NNGFGNGNRSFNDNRNGN) are compositionally biased toward low complexity.

It belongs to the polyribonucleotide nucleotidyltransferase family. Requires Mg(2+) as cofactor.

The protein localises to the cytoplasm. The enzyme catalyses RNA(n+1) + phosphate = RNA(n) + a ribonucleoside 5'-diphosphate. Involved in mRNA degradation. Catalyzes the phosphorolysis of single-stranded polyribonucleotides processively in the 3'- to 5'-direction. The protein is Polyribonucleotide nucleotidyltransferase of Ehrlichia ruminantium (strain Welgevonden).